The following is a 263-amino-acid chain: Probable septum site-determining protein MinC (263 aa).

The disordered stretch occupies residues 107-159 (LPPSGARERPLDIKDSAPRKPAEEPSPSAGEARPEPAKAEEKPADPVSRPTKV). Composition is skewed to basic and acidic residues over residues 112–129 (ARERPLDIKDSAPRKPAE) and 138–150 (ARPEPAKAEEKPA).

Belongs to the MinC family. Interacts with MinD and FtsZ.

In terms of biological role, cell division inhibitor that blocks the formation of polar Z ring septums. Rapidly oscillates between the poles of the cell to destabilize FtsZ filaments that have formed before they mature into polar Z rings. Prevents FtsZ polymerization. This is Probable septum site-determining protein MinC from Pseudomonas aeruginosa (strain UCBPP-PA14).